The primary structure comprises 338 residues: Glycerol-3-phosphate dehydrogenase [NAD(P)+] (338 aa).

The NADPH site is built by Trp11, Arg30, and Lys109. Sn-glycerol 3-phosphate-binding residues include Lys109, Gly143, and Ser145. Ala147 is an NADPH binding site. Lys198, Asp251, Ser261, Arg262, and Asn263 together coordinate sn-glycerol 3-phosphate. Residue Lys198 is the Proton acceptor of the active site. Arg262 is an NADPH binding site. Positions 286 and 288 each coordinate NADPH.

This sequence belongs to the NAD-dependent glycerol-3-phosphate dehydrogenase family.

It localises to the cytoplasm. The catalysed reaction is sn-glycerol 3-phosphate + NAD(+) = dihydroxyacetone phosphate + NADH + H(+). It catalyses the reaction sn-glycerol 3-phosphate + NADP(+) = dihydroxyacetone phosphate + NADPH + H(+). It functions in the pathway membrane lipid metabolism; glycerophospholipid metabolism. In terms of biological role, catalyzes the reduction of the glycolytic intermediate dihydroxyacetone phosphate (DHAP) to sn-glycerol 3-phosphate (G3P), the key precursor for phospholipid synthesis. This chain is Glycerol-3-phosphate dehydrogenase [NAD(P)+], found in Cupriavidus taiwanensis (strain DSM 17343 / BCRC 17206 / CCUG 44338 / CIP 107171 / LMG 19424 / R1) (Ralstonia taiwanensis (strain LMG 19424)).